A 137-amino-acid polypeptide reads, in one-letter code: Putative pre-16S rRNA nuclease (137 aa).

The protein belongs to the YqgF nuclease family.

The protein resides in the cytoplasm. Could be a nuclease involved in processing of the 5'-end of pre-16S rRNA. This chain is Putative pre-16S rRNA nuclease, found in Mycoplasmopsis synoviae (strain 53) (Mycoplasma synoviae).